A 991-amino-acid chain; its full sequence is UPF0182 protein RHA1_ro08670 (991 aa).

7 consecutive transmembrane segments (helical) span residues 16-36 (VMIM…RLVV), 61-81 (LILF…AVVW), 115-135 (FTVG…QASW), 170-190 (LILA…LGTH), 214-234 (VQLA…YWLD), 263-283 (RLIM…AIAV), and 291-311 (MATA…PALI). Residues 902–940 (TGAVATAPGGDATTPPPTGGQPPAPPPPGAPPAPPPATS) form a disordered region. Residues 903 to 914 (GAVATAPGGDAT) show a composition bias toward low complexity. A compositionally biased stretch (pro residues) spans 915–938 (TPPPTGGQPPAPPPPGAPPAPPPA).

It belongs to the UPF0182 family.

The protein localises to the cell membrane. The protein is UPF0182 protein RHA1_ro08670 of Rhodococcus jostii (strain RHA1).